A 377-amino-acid polypeptide reads, in one-letter code: Queuine tRNA-ribosyltransferase (377 aa).

Residue Asp89 is the Proton acceptor of the active site. Substrate contacts are provided by residues 89 to 93 (DSGGF), Asp143, Gln188, and Gly215. Residues 246 to 252 (GVGKPED) are RNA binding. The active-site Nucleophile is the Asp265. The RNA binding; important for wobble base 34 recognition stretch occupies residues 270-274 (TRNAR). Zn(2+) contacts are provided by Cys303, Cys305, Cys308, and His334.

This sequence belongs to the queuine tRNA-ribosyltransferase family. As to quaternary structure, homodimer. Within each dimer, one monomer is responsible for RNA recognition and catalysis, while the other monomer binds to the replacement base PreQ1. Zn(2+) is required as a cofactor.

It catalyses the reaction 7-aminomethyl-7-carbaguanine + guanosine(34) in tRNA = 7-aminomethyl-7-carbaguanosine(34) in tRNA + guanine. The protein operates within tRNA modification; tRNA-queuosine biosynthesis. Its function is as follows. Catalyzes the base-exchange of a guanine (G) residue with the queuine precursor 7-aminomethyl-7-deazaguanine (PreQ1) at position 34 (anticodon wobble position) in tRNAs with GU(N) anticodons (tRNA-Asp, -Asn, -His and -Tyr). Catalysis occurs through a double-displacement mechanism. The nucleophile active site attacks the C1' of nucleotide 34 to detach the guanine base from the RNA, forming a covalent enzyme-RNA intermediate. The proton acceptor active site deprotonates the incoming PreQ1, allowing a nucleophilic attack on the C1' of the ribose to form the product. After dissociation, two additional enzymatic reactions on the tRNA convert PreQ1 to queuine (Q), resulting in the hypermodified nucleoside queuosine (7-(((4,5-cis-dihydroxy-2-cyclopenten-1-yl)amino)methyl)-7-deazaguanosine). This chain is Queuine tRNA-ribosyltransferase, found in Acinetobacter baumannii (strain SDF).